The primary structure comprises 29 residues: Chassatide C1 (29 aa).

A cross-link (cyclopeptide (Gly-Asn)) is located at residues 1 to 29 (GDACGETCFTGICFTAGCSCNPWPTCTRN). 3 disulfides stabilise this stretch: C4–C18, C8–C20, and C13–C26.

In terms of processing, this is a cyclic peptide. As to expression, expressed in leaf, fruit, pedical and stem but not in root (at protein level).

Its function is as follows. Probably participates in a plant defense mechanism. The chain is Chassatide C1 from Chassalia chartacea (Chassalia curviflora).